The primary structure comprises 242 residues: Methylthioribulose-1-phosphate dehydratase (242 aa).

A Phosphoserine modification is found at serine 87. A substrate-binding site is contributed by cysteine 97. Positions 115 and 117 each coordinate Zn(2+). Glutamate 139 (proton donor/acceptor) is an active-site residue. Histidine 195 lines the Zn(2+) pocket.

It belongs to the aldolase class II family. MtnB subfamily. As to quaternary structure, homotetramer. Interacts with APAF1. May interact with CASP1. Requires Zn(2+) as cofactor. In terms of tissue distribution, isoform 1 is ubiquitously expressed. Isoform 2 is expressed at lower levels and detected in heart, brain, pancreas, liver, placenta, skeletal muscle and kidney.

The protein resides in the cytoplasm. It carries out the reaction 5-(methylsulfanyl)-D-ribulose 1-phosphate = 5-methylsulfanyl-2,3-dioxopentyl phosphate + H2O. It participates in amino-acid biosynthesis; L-methionine biosynthesis via salvage pathway; L-methionine from S-methyl-5-thio-alpha-D-ribose 1-phosphate: step 2/6. Functionally, catalyzes the dehydration of methylthioribulose-1-phosphate (MTRu-1-P) into 2,3-diketo-5-methylthiopentyl-1-phosphate (DK-MTP-1-P). Functions in the methionine salvage pathway, which plays a key role in cancer, apoptosis, microbial proliferation and inflammation. May inhibit the CASP1-related inflammatory response (pyroptosis), the CASP9-dependent apoptotic pathway and the cytochrome c-dependent and APAF1-mediated cell death. This is Methylthioribulose-1-phosphate dehydratase from Homo sapiens (Human).